The primary structure comprises 133 residues: Small ribosomal subunit protein uS19 (133 aa).

This sequence belongs to the universal ribosomal protein uS19 family. In terms of assembly, part of the 30S ribosomal subunit.

Its function is as follows. Protein S19 forms a complex with S13 that binds strongly to the 16S ribosomal RNA. This chain is Small ribosomal subunit protein uS19, found in Thermococcus kodakarensis (strain ATCC BAA-918 / JCM 12380 / KOD1) (Pyrococcus kodakaraensis (strain KOD1)).